The following is a 779-amino-acid chain: Endonuclease MutS2 (779 aa).

328–335 (GPNTGGKT) lines the ATP pocket. Residues 704–779 (LDLRGKRYEE…GSGATIVTLG (76 aa)) form the Smr domain.

Belongs to the DNA mismatch repair MutS family. MutS2 subfamily. In terms of assembly, homodimer. Binds to stalled ribosomes, contacting rRNA.

In terms of biological role, endonuclease that is involved in the suppression of homologous recombination and thus may have a key role in the control of bacterial genetic diversity. Functionally, acts as a ribosome collision sensor, splitting the ribosome into its 2 subunits. Detects stalled/collided 70S ribosomes which it binds and splits by an ATP-hydrolysis driven conformational change. Acts upstream of the ribosome quality control system (RQC), a ribosome-associated complex that mediates the extraction of incompletely synthesized nascent chains from stalled ribosomes and their subsequent degradation. Probably generates substrates for RQC. This chain is Endonuclease MutS2, found in Streptococcus pyogenes serotype M1.